The following is a 403-amino-acid chain: Phosphoglycerate kinase (403 aa).

Substrate contacts are provided by residues 24-26 (DLN), Arg-39, 62-65 (HLGR), Arg-121, and Arg-161. Residues Lys-211, Gly-299, Glu-330, and 359 to 362 (GGDS) each bind ATP.

The protein belongs to the phosphoglycerate kinase family. In terms of assembly, monomer.

Its subcellular location is the cytoplasm. The enzyme catalyses (2R)-3-phosphoglycerate + ATP = (2R)-3-phospho-glyceroyl phosphate + ADP. The protein operates within carbohydrate degradation; glycolysis; pyruvate from D-glyceraldehyde 3-phosphate: step 2/5. In Rhodococcus opacus (strain B4), this protein is Phosphoglycerate kinase.